The sequence spans 142 residues: Hemoglobin subunit alpha (142 aa).

Position 1 is an N-acetylserine (S1). A Globin domain is found at 1-142 (SLSDKDKAAV…VALALAERYR (142 aa)). H59 serves as a coordination point for O2. H88 provides a ligand contact to heme b.

Belongs to the globin family. As to quaternary structure, hb1 is a heterotetramer of two alpha chains and two beta chains. HbC is a heterotetramer of two alpha chains and two beta-C chains. Red blood cells.

Its function is as follows. Involved in oxygen transport from gills to the various peripheral tissues. This Trematomus bernacchii (Emerald rockcod) protein is Hemoglobin subunit alpha (hba).